A 201-amino-acid chain; its full sequence is Small ribosomal subunit protein uS4 (201 aa).

The 61-residue stretch at 91 to 151 (SRLDNVVYRA…EKSQKMNWFE (61 aa)) folds into the S4 RNA-binding domain.

The protein belongs to the universal ribosomal protein uS4 family. As to quaternary structure, part of the 30S ribosomal subunit. Contacts protein S5. The interaction surface between S4 and S5 is involved in control of translational fidelity.

One of the primary rRNA binding proteins, it binds directly to 16S rRNA where it nucleates assembly of the body of the 30S subunit. Its function is as follows. With S5 and S12 plays an important role in translational accuracy. This chain is Small ribosomal subunit protein uS4, found in Corynebacterium glutamicum (strain ATCC 13032 / DSM 20300 / JCM 1318 / BCRC 11384 / CCUG 27702 / LMG 3730 / NBRC 12168 / NCIMB 10025 / NRRL B-2784 / 534).